Here is a 179-residue protein sequence, read N- to C-terminus: ATP synthase subunit delta (179 aa).

It belongs to the ATPase delta chain family. As to quaternary structure, F-type ATPases have 2 components, F(1) - the catalytic core - and F(0) - the membrane proton channel. F(1) has five subunits: alpha(3), beta(3), gamma(1), delta(1), epsilon(1). F(0) has three main subunits: a(1), b(2) and c(10-14). The alpha and beta chains form an alternating ring which encloses part of the gamma chain. F(1) is attached to F(0) by a central stalk formed by the gamma and epsilon chains, while a peripheral stalk is formed by the delta and b chains.

Its subcellular location is the cell inner membrane. Its function is as follows. F(1)F(0) ATP synthase produces ATP from ADP in the presence of a proton or sodium gradient. F-type ATPases consist of two structural domains, F(1) containing the extramembraneous catalytic core and F(0) containing the membrane proton channel, linked together by a central stalk and a peripheral stalk. During catalysis, ATP synthesis in the catalytic domain of F(1) is coupled via a rotary mechanism of the central stalk subunits to proton translocation. Functionally, this protein is part of the stalk that links CF(0) to CF(1). It either transmits conformational changes from CF(0) to CF(1) or is implicated in proton conduction. In Bordetella avium (strain 197N), this protein is ATP synthase subunit delta.